A 178-amino-acid chain; its full sequence is Large ribosomal subunit protein uL6 (178 aa).

This sequence belongs to the universal ribosomal protein uL6 family. In terms of assembly, part of the 50S ribosomal subunit.

Functionally, this protein binds to the 23S rRNA, and is important in its secondary structure. It is located near the subunit interface in the base of the L7/L12 stalk, and near the tRNA binding site of the peptidyltransferase center. This is Large ribosomal subunit protein uL6 from Thermobifida fusca (strain YX).